A 1427-amino-acid polypeptide reads, in one-letter code: Protein NPAT (1427 aa).

The segment at 1 to 318 (MLLPSDVARL…EEAIQDILEQ (318 aa)) is interaction with MIZF. The LisH domain occupies 3–35 (LPSDVARLVLGYLQQENLISTCQTFILESSDLK). Required for activation of histone gene transcription and interaction with MIZF stretches follow at residues 5 to 25 (SDVA…STCQ) and 121 to 145 (KRQR…YLSG). The disordered stretch occupies residues 199 to 231 (KKAHASLMSPGRRKSESQRKSTTLSGPHSTIRN). At Ser207 the chain carries Phosphoserine. Over residues 218–231 (KSTTLSGPHSTIRN) the composition is skewed to polar residues. A mediates transcriptional activation region spans residues 262–338 (KLAENINKFL…FDLFDYGKTK (77 aa)). Phosphoserine is present on residues Ser554 and Ser599. Positions 628 to 644 (SLSSTKQPSNDSASVEL) are enriched in polar residues. Disordered regions lie at residues 628–669 (SLSS…VKEE) and 683–732 (EKVA…SAEI). Residues 629–653 (LSSTKQPSNDSASVELNHTENEAQA) form a required for acceleration of G1 phase region. The segment covering 654 to 665 (SKSENSQEPSSS) has biased composition (low complexity). Residues 695-711 (VENSHSLPPESVCSSVG) show a composition bias toward polar residues. Ser775 and Ser779 each carry phosphoserine; by CDK2. Required for acceleration of G1 phase regions lie at residues 828 to 853 (QNED…IQLM) and 1039 to 1054 (KSEE…SIVP). Disordered stretches follow at residues 1095–1121 (FPNL…EKEK) and 1133–1152 (SAIS…KVSP). Over residues 1097–1114 (NLDSPNVSSTLKPPSNNA) the composition is skewed to polar residues. Ser1100 bears the Phosphoserine; by CDK2 mark. Residues Lys1116 and Lys1149 each participate in a glycyl lysine isopeptide (Lys-Gly) (interchain with G-Cter in SUMO2) cross-link. Basic and acidic residues predominate over residues 1140–1151 (TIRETQSEKKVS). A phosphoserine mark is found at Ser1151 and Ser1200. The residue at position 1228 (Lys1228) is an N6-acetyllysine. Positions 1228-1252 (KDLKQEQTKSASSLITTEMLQDIQR) are required for acceleration of G1 phase. 2 disordered regions span residues 1253-1327 (HSSV…SENS) and 1348-1413 (SATP…FPAG). Ser1254 is modified (phosphoserine). Thr1270 carries the post-translational modification Phosphothreonine; by CDK2. Residues 1276–1285 (GEKHKEEPID) show a composition bias toward basic and acidic residues. Lys1280 is covalently cross-linked (Glycyl lysine isopeptide (Lys-Gly) (interchain with G-Cter in SUMO2)). A required for acceleration of G1 phase region spans residues 1325-1349 (ENSVNMAAHTLMILSRAAISRTTSA). The segment covering 1348–1365 (SATPLKDNTQQFRASSRS) has biased composition (polar residues). At Thr1350 the chain carries Phosphothreonine; by CDK2. The span at 1371 to 1382 (KIEELDERERNS) shows a compositional bias: basic and acidic residues. Polar residues predominate over residues 1383-1394 (RPSSKNLTNSSI). Positions 1396–1406 (MKKKKIKKKKL) are enriched in basic residues.

The protein belongs to the NPAT family. In terms of assembly, interacts with the cylin/CDK complexes CCNE1/CDK2 and CCNA1/CDK2. Interacts with BZW1, CASP8AP2, CREBBP, MIZF and YY1. Interacts with the RUVBL1, RUVBL2 and TRRAP subunits of the NuA4 complex. May also interact with GAPDH, NME1, NME2 and STIP1. Phosphorylated at Ser-775, Ser-779, Ser-1100, Thr-1270 and Thr-1350 by CCNE1/CDK2 at G1-S transition and until prophase, which promotes association with histone gene clusters and stimulates activation of histone transcription. Also phosphorylated by CCNA1/CDK2 in vitro. As to expression, ubiquitously expressed.

The protein localises to the nucleus. It localises to the cajal body. Functionally, required for progression through the G1 and S phases of the cell cycle and for S phase entry. Activates transcription of the histone H2A, histone H2B, histone H3 and histone H4 genes in conjunction with MIZF. Also positively regulates the ATM, MIZF and PRKDC promoters. Transcriptional activation may be accomplished at least in part by the recruitment of the NuA4 histone acetyltransferase (HAT) complex to target gene promoters. The polypeptide is Protein NPAT (NPAT) (Homo sapiens (Human)).